We begin with the raw amino-acid sequence, 85 residues long: MDTIIDAIASLPQDTLIVAVLYLGLSLLYLLIIPGFVYFYLNSRWYVASSFERAFMYFLMFFFFPGVLLLSPFLNFRPKRRQVNS.

Helical transmembrane passes span 17 to 37 and 54 to 74; these read IVAVLYLGLSLLYLLIIPGFV and AFMYFLMFFFFPGVLLLSPFL.

Belongs to the complex I NdhL subunit family. As to quaternary structure, NDH-1 can be composed of about 15 different subunits; different subcomplexes with different compositions have been identified which probably have different functions.

It localises to the cellular thylakoid membrane. It catalyses the reaction a plastoquinone + NADH + (n+1) H(+)(in) = a plastoquinol + NAD(+) + n H(+)(out). The enzyme catalyses a plastoquinone + NADPH + (n+1) H(+)(in) = a plastoquinol + NADP(+) + n H(+)(out). Functionally, NDH-1 shuttles electrons from an unknown electron donor, via FMN and iron-sulfur (Fe-S) centers, to quinones in the respiratory and/or the photosynthetic chain. The immediate electron acceptor for the enzyme in this species is believed to be plastoquinone. Couples the redox reaction to proton translocation, and thus conserves the redox energy in a proton gradient. Cyanobacterial NDH-1 also plays a role in inorganic carbon-concentration. This chain is NAD(P)H-quinone oxidoreductase subunit L, found in Crocosphaera subtropica (strain ATCC 51142 / BH68) (Cyanothece sp. (strain ATCC 51142)).